The primary structure comprises 379 residues: MKILRKNHPLLKIINHSFIDLPTPSNISSWWNFGSLLGMCLVIQILTGLFLAMHYTSDTTTAFSSVAHICRDVNYGWLIRYLHANGASMFFICLFIHVGRGIYYGSYVLSETWNIGIILFLTTMATAFVGYVLPWGQMSFWGATVITNLLSAIPYIGSTLVEWIWGGFSVDKATLTRFFAFHFILPFIIAAFALVHLLFLHETGSNNPSGLNSDSDKIPFHPYYTTKDLLGIFLLLLVLMILALFFPDILGDPDNFTPANPLNTPAHIKPEWYFLFAYAILRSIPNKLGGVLALVLSILILAAFPLLNISKQHGLIFRPVTQIIYWIFIANLLVLTWIGGQPVEYPFTTIGQIASITYFTIIIILIPVSNTIENNIIKL.

4 consecutive transmembrane segments (helical) span residues 33–53, 77–98, 113–133, and 178–198; these read FGSL…FLAM, WLIR…FIHV, WNIG…GYVL, and FFAF…VHLL. Heme b-binding residues include His83 and His97. His182 and His196 together coordinate heme b. Position 201 (His201) interacts with a ubiquinone. A run of 4 helical transmembrane segments spans residues 226 to 246, 288 to 308, 320 to 340, and 347 to 367; these read TKDL…ALFF, LGGV…PLLN, VTQI…WIGG, and FTTI…ILIP.

This sequence belongs to the cytochrome b family. In terms of assembly, the cytochrome bc1 complex contains 11 subunits: 3 respiratory subunits (MT-CYB, CYC1 and UQCRFS1), 2 core proteins (UQCRC1 and UQCRC2) and 6 low-molecular weight proteins (UQCRH/QCR6, UQCRB/QCR7, UQCRQ/QCR8, UQCR10/QCR9, UQCR11/QCR10 and a cleavage product of UQCRFS1). This cytochrome bc1 complex then forms a dimer. The cofactor is heme b.

The protein resides in the mitochondrion inner membrane. Functionally, component of the ubiquinol-cytochrome c reductase complex (complex III or cytochrome b-c1 complex) that is part of the mitochondrial respiratory chain. The b-c1 complex mediates electron transfer from ubiquinol to cytochrome c. Contributes to the generation of a proton gradient across the mitochondrial membrane that is then used for ATP synthesis. The chain is Cytochrome b (MT-CYB) from Akodon reigi (Reig's grass mouse).